A 112-amino-acid chain; its full sequence is MKEMTGLHSLVSIENFIKQHKFSFIYISRPGCTVCHAVLPQLRIVLDQFPNIKLGHINADDVAEVAGRFSVFTVPVLLLFIDGTEFLREARFVHFEQLEQKLKRVYRLYEGE.

The Thioredoxin domain maps to 1 to 107; it reads MKEMTGLHSL…LEQKLKRVYR (107 aa). Cysteines 32 and 35 form a disulfide.

This chain is Thioredoxin-like protein YdfQ (ydfQ), found in Bacillus subtilis (strain 168).